The following is a 309-amino-acid chain: Olfactory receptor 4A47 (309 aa).

At 1-23 (MEPRKNVTDFVLLGFTQNPKEQK) the chain is on the extracellular side. A glycan (N-linked (GlcNAc...) asparagine) is linked at asparagine 6. The chain crosses the membrane as a helical span at residues 24 to 47 (VLFVMFLLFYILTMVGNLLIVVTV). At 48-55 (TVSETLGS) the chain is on the cytoplasmic side. A helical transmembrane segment spans residues 56 to 77 (PMYFFLAGLSFIDIIYSSSISP). At 78–98 (RLISGLFFGNNSISFQSCMAQ) the chain is on the extracellular side. Asparagine 87 carries N-linked (GlcNAc...) asparagine glycosylation. Cysteine 95 and cysteine 187 are oxidised to a cystine. A helical transmembrane segment spans residues 99–118 (LFIEHIFGGSEVFLLLVMAY). The Cytoplasmic portion of the chain corresponds to 119-137 (DCYVAICKPLHYLVIMRQW). The helical transmembrane segment at 138-156 (VCVVLLVVSWVGGFLHSVF) threads the bilayer. At 157 to 193 (QLSIIYGLPFCGPNVIDHFFCDMYPLLKLVCTDTHAI) the chain is on the extracellular side. Residues 194-217 (GLLVVANGGLACTIVFLLLLISYG) form a helical membrane-spanning segment. Over 218–233 (VILHSLKNLSQKGRQK) the chain is Cytoplasmic. Residues 234-256 (ALSTCSSHMTVVVFFFVPCIFMY) traverse the membrane as a helical segment. At 257–267 (ARPARTFPIDK) the chain is on the extracellular side. A helical membrane pass occupies residues 268 to 287 (SVSVFYTVITPMLNPLIYTL). Residues 288–309 (RNSEMTSAMKKLWRRDLISSST) lie on the Cytoplasmic side of the membrane.

The protein belongs to the G-protein coupled receptor 1 family.

It localises to the cell membrane. Its function is as follows. Odorant receptor. This is Olfactory receptor 4A47 (OR4A47) from Homo sapiens (Human).